The chain runs to 300 residues: MNQTYGRLVSRAAIAATVMASLLLLIKIFAWWYTGSVSILAALVDSLVDIAASLTNLLVVRYSLQPADDEHTFGHGKAESLAALAQSMFISGSALFLFLTGIQHLITPTPMNEPGVGIVVTLIALVCTIILVTFQRWVVRKTQSQAVRADMLHYQSDVMMNGAILVALGLAWYGWHRADALFALGIGIYILYSALRMGYEAVQSLLDRALPDEERQEIIDIVTSWPGVNGAHDLRTRQSGPTRFIQIHLEMEDNLPLVQAHLVAEQVEQAILRRFPGSDVIIHQDPCSVVPREGKRFELS.

The next 4 helical transmembrane spans lie at 12–32 (AAIA…FAWW), 39–59 (ILAA…NLLV), 82–102 (AALA…LTGI), and 114–134 (PGVG…LVTF). Aspartate 45 and aspartate 49 together coordinate Zn(2+). Histidine 153 and aspartate 157 together coordinate Zn(2+). The helical transmembrane segment at 164–184 (ILVALGLAWYGWHRADALFAL) threads the bilayer.

The protein belongs to the cation diffusion facilitator (CDF) transporter (TC 2.A.4) family. FieF subfamily. In terms of assembly, homodimer.

It is found in the cell inner membrane. It carries out the reaction Zn(2+)(in) + H(+)(out) = Zn(2+)(out) + H(+)(in). The catalysed reaction is Cd(2+)(in) + H(+)(out) = Cd(2+)(out) + H(+)(in). It catalyses the reaction Fe(2+)(in) + H(+)(out) = Fe(2+)(out) + H(+)(in). Divalent metal cation transporter which exports Zn(2+), Cd(2+) and possibly Fe(2+). May be involved in zinc and iron detoxification by efflux. This chain is Cation-efflux pump FieF, found in Citrobacter koseri (strain ATCC BAA-895 / CDC 4225-83 / SGSC4696).